The chain runs to 98 residues: Protein FAM24A (98 aa).

Positions 1 to 29 (MFDLRTKVMIGIASTLLIAAIMLITLVFC) are cleaved as a signal peptide.

It belongs to the FAM24 family.

It localises to the secreted. This is Protein FAM24A (Fam24a) from Mus musculus (Mouse).